Reading from the N-terminus, the 323-residue chain is Probable oxidoreductase patJ (323 aa).

The disordered stretch occupies residues 291 to 323 (DQSANGVNGHATGVEAKKKQLGDMTRRRSGAQE). A compositionally biased stretch (basic and acidic residues) spans 305–316 (EAKKKQLGDMTR).

Belongs to the oxidoreductase OpS7 family.

Its subcellular location is the vacuole lumen. It is found in the cytoplasmic vesicle lumen. It participates in mycotoxin biosynthesis; patulin biosynthesis. Probable oxidoreductase; part of the gene cluster that mediates the biosynthesis of patulin, an acetate-derived tetraketide mycotoxin produced by several fungal species that shows antimicrobial properties against several bacteria. PatJ acts with patO in the vacuole to convert gentisyl alcohol to isoepoxydon. The pathway begins with the synthesis of 6-methylsalicylic acid by the polyketide synthase (PKS) patK via condensation of acetate and malonate units. The 6-methylsalicylic acid decarboxylase patG then catalyzes the decarboxylation of 6-methylsalicylic acid to yield m-cresol (also known as 3-methylphenol). These first reactions occur in the cytosol. The intermediate m-cresol is then transported into the endoplasmic reticulum where the cytochrome P450 monooxygenase patH converts it to m-hydroxybenzyl alcohol, which is further converted to gentisyl alcohol by the cytochrome P450 monooxygenase patI. The oxidoreductases patJ and patO further convert gentisyl alcohol to isoepoxydon in the vacuole. PatN catalyzes then the transformation of isoepoxydon into phyllostine. The cluster protein patF is responsible for the conversion from phyllostine to neopatulin whereas the alcohol dehydrogenase patD converts neopatulin to E-ascladiol. The steps between isoepoxydon and E-ascladiol occur in the cytosol, and E-ascladiol is probably secreted to the extracellular space by one of the cluster-specific transporters patC or patM. Finally, the secreted patulin synthase patE catalyzes the conversion of E-ascladiol to patulin. The sequence is that of Probable oxidoreductase patJ from Aspergillus clavatus (strain ATCC 1007 / CBS 513.65 / DSM 816 / NCTC 3887 / NRRL 1 / QM 1276 / 107).